Reading from the N-terminus, the 359-residue chain is Tryptophan 2,3-dioxygenase (359 aa).

Substrate-binding positions include 38–42 and Arg109; that span reads FIIVH. His295 is a heme binding site. Thr309 contributes to the substrate binding site.

It belongs to the tryptophan 2,3-dioxygenase family. Homotetramer. Heme is required as a cofactor.

It catalyses the reaction L-tryptophan + O2 = N-formyl-L-kynurenine. The protein operates within amino-acid degradation; L-tryptophan degradation via kynurenine pathway; L-kynurenine from L-tryptophan: step 1/2. Heme-dependent dioxygenase that catalyzes the oxidative cleavage of the L-tryptophan (L-Trp) pyrrole ring and converts L-tryptophan to N-formyl-L-kynurenine. Catalyzes the oxidative cleavage of the indole moiety. The polypeptide is Tryptophan 2,3-dioxygenase (Bdellovibrio bacteriovorus (strain ATCC 15356 / DSM 50701 / NCIMB 9529 / HD100)).